The chain runs to 336 residues: Potassium channel subfamily K member 1 (336 aa).

Residues 1 to 20 (MLQSLAGSSCVRLVERHRSA) are Cytoplasmic-facing. A helical transmembrane segment spans residues 21–41 (RCFGFLVLGYLLYLVFGAVVF). Residues 42–103 (SSVELPYEDL…SNASGNWNWD (62 aa)) lie on the Extracellular side of the membrane. Asn-95 carries an N-linked (GlcNAc...) asparagine glycan. Positions 104-116 (FTSALFFASTVLS) form an intramembrane region, helical. An intramembrane segment occupies 117-122 (TTGYGH). The tract at residues 117–122 (TTGYGH) is selectivity filter 1. Residues 123–132 (TVPLSDGGKA) are Extracellular-facing. The chain crosses the membrane as a helical span at residues 133–156 (FCIIYSVIGIPFTLLFLTAVVQRI). Residues 157–181 (TVHVTRRPVLYFHIRWGFSKQVVAI) are Cytoplasmic-facing. The chain crosses the membrane as a helical span at residues 182-202 (VHAVLLGFVTVSCFFFIPAAV). Topologically, residues 203–211 (FSVLEDDWN) are extracellular. Residues 212 to 224 (FLESFYFCFISLS) constitute an intramembrane region (helical). Residues 225-230 (TIGLGD) are selectivity filter 2. An intramembrane segment occupies 225-231 (TIGLGDY). Topologically, residues 232-243 (VPGEGYNQKFRE) are extracellular. A helical membrane pass occupies residues 244-267 (LYKIGITCYLLLGLIAMLVVLETF). Residues 268-336 (CELHELKKFR…SACMDGPANH (69 aa)) are Cytoplasmic-facing. A Glycyl lysine isopeptide (Lys-Gly) (interchain with G-Cter in SUMO) cross-link involves residue Lys-274. The tract at residues 293–299 (IIEHDQL) is important for intracellular retention in recycling endosomes. Residues 315 to 336 (QKQNEPFVATQSSACMDGPANH) are disordered. Ser-326 is subject to Phosphoserine.

It belongs to the two pore domain potassium channel (TC 1.A.1.8) family. Homodimer; disulfide-linked. Heterodimer with KCNK2; disulfide-linked. In astrocytes, forms mostly heterodimeric potassium channels with KCNK2, with only a minor proportion of functional channels containing homodimeric KCNK1. Interacts with KCNK3 and KCNK9, forming functional heterodimeric channels. Interacts with GNG4. Identified in a complex with PSD and ARF6; interacts only with PSD that is bound to ARF6. Interacts with UBE2I. Post-translationally, sumoylation is controversial. Sumoylated by UBE2I. Not sumoylated when expressed in xenopus oocytes or mammalian cells. Sumoylation inactivates the channel, but does not interfere with expression at the cell membrane. Sumoylation of a single subunit is sufficient to silence the dimeric channel. Sumoylation of KCNK1 is sufficient to silence heterodimeric channels formed by KCNK1 and KCNK3 or KCNK9. Desumoylated by SENP1; this activates the channel. Desumoylated by SENP1; this strongly increases halothane-mediated activation of heterodimeric channels formed with KCNK9. SENP1 treatment has no effect.

The protein resides in the cell membrane. The protein localises to the recycling endosome. It is found in the synaptic cell membrane. It localises to the cytoplasmic vesicle. Its subcellular location is the perikaryon. The protein resides in the cell projection. The protein localises to the dendrite. It is found in the apical cell membrane. It catalyses the reaction K(+)(in) = K(+)(out). The catalysed reaction is NH4(+)(in) = NH4(+)(out). It carries out the reaction Na(+)(in) = Na(+)(out). The enzyme catalyses Rb(+)(in) = Rb(+)(out). It catalyses the reaction Cs(+)(in) = Cs(+)(out). The catalysed reaction is Li(+)(in) = Li(+)(out). It carries out the reaction L-glutamate(out) = L-glutamate(in). The enzyme catalyses chloride(in) = chloride(out). Functionally, ion channel that contributes to passive transmembrane potassium transport and to the regulation of the resting membrane potential in brain astrocytes, but also in kidney and in other tissues. Forms dimeric channels through which potassium ions pass in accordance with their electrochemical gradient. The channel is selective for K(+) ions at physiological potassium concentrations and at neutral pH, but becomes permeable to Na(+) at subphysiological K(+) levels, and upon acidification of the extracellular medium. The homodimer has very low potassium channel activity, when expressed in heterologous systems, and can function as weakly inward rectifying potassium channel. Channel activity is modulated by activation of serotonin receptors. Heterodimeric channels containing KCNK1 and KCNK2 have much higher activity, and may represent the predominant form in astrocytes. Heterodimeric channels containing KCNK1 and KCNK3 or KCNK9 have much higher activity. Heterodimeric channels formed by KCNK1 and KCNK9 may contribute to halothane-sensitive currents. Mediates outward rectifying potassium currents in dentate gyrus granule cells and contributes to the regulation of their resting membrane potential. Contributes to the regulation of action potential firing in dentate gyrus granule cells and down-regulates their intrinsic excitability. In astrocytes, the heterodimer formed by KCNK1 and KCNK2 is required for rapid glutamate release in response to activation of G-protein coupled receptors, such as F2R and CNR1. Required for normal ion and water transport in the kidney. Contributes to the regulation of the resting membrane potential of pancreatic beta cells. The low channel activity of homodimeric KCNK1 may be due to sumoylation. The low channel activity may be due to rapid internalization from the cell membrane and retention in recycling endosomes. Permeable to monovalent cations with ion selectivity for K(+) &gt; Rb(+) &gt;&gt; NH4(+) &gt;&gt; Cs(+) = Na(+) = Li(+). The sequence is that of Potassium channel subfamily K member 1 from Pongo abelii (Sumatran orangutan).